A 563-amino-acid polypeptide reads, in one-letter code: Arginine--tRNA ligase (563 aa).

Positions 120-130 (PNIAKPFHVGH) match the 'HIGH' region motif.

This sequence belongs to the class-I aminoacyl-tRNA synthetase family. Monomer.

Its subcellular location is the cytoplasm. The catalysed reaction is tRNA(Arg) + L-arginine + ATP = L-arginyl-tRNA(Arg) + AMP + diphosphate. The polypeptide is Arginine--tRNA ligase (Clostridium acetobutylicum (strain ATCC 824 / DSM 792 / JCM 1419 / IAM 19013 / LMG 5710 / NBRC 13948 / NRRL B-527 / VKM B-1787 / 2291 / W)).